Reading from the N-terminus, the 62-residue chain is Large ribosomal subunit protein uL29 (62 aa).

This sequence belongs to the universal ribosomal protein uL29 family.

This is Large ribosomal subunit protein uL29 from Geobacter sulfurreducens (strain ATCC 51573 / DSM 12127 / PCA).